The primary structure comprises 1549 residues: Trichohyalin (1549 aa).

The tract at residues 1-91 (MSPLLRSIFN…AAACYYALGQ (91 aa)) is S-100-like. EF-hand domains lie at 23 to 48 (CDGTTLSKKDLKNLLEREFGEILRKP) and 49 to 84 (HDPETVDLVLELQDRDRDGLIDFHEFLAIVFKVAAA). T27, D32, D62, D64, D66, and E73 together coordinate Ca(2+). Disordered regions lie at residues 97 to 125 (EKEAKCERKGNPLQDRRREDQRRFEPQDR), 157 to 180 (LQRREQEEYGGEEELQQRPKGREL), 262 to 359 (LRRK…KQEQ), and 404 to 448 (QREK…RQER). Basic and acidic residues-rich tracts occupy residues 171-180 (LQQRPKGREL), 262-278 (LRRKEQERREQQLRQEQ), and 317-335 (HRQEQQSRRQEQELLERQQ). Residues 336-348 (EQQISEEVQSLQE) are compositionally biased toward low complexity. The segment covering 349–359 (DQGRQRLKQEQ) has biased composition (basic and acidic residues). 14 consecutive repeat copies span residues 413 to 448 (ERQYREVELQREEERLQREEEQLQREEREKRRRQER), 449 to 476 (EKQYLEKVELWEEEQLQREEREKRRQER), 477 to 504 (EKQYLEKVELREEEQLQRQEREKRRQER), 505 to 532 (ERQYLEKVELQEEEQLQREEREKRRQER), 533 to 560 (ERQYLEKVELQEEEQLQRQEREKRRQER), 561 to 588 (EKQYLEKVELQEEEQLQRQERQKRRQER), 589 to 616 (EKQYLEKVELQEEEQLQRQEREKRRQER), 617 to 644 (ERQYLEKVELQEEEQVQRQEREKRRQER), 645 to 678 (ERQYLEKELQRQEERLQEEEQLLREEREKRRQER), 679 to 706 (ERQYLEKVELQEEEQLQREEREKRRQER), 707 to 742 (ERQYLEKEELQRQEERLQREKEQLQREDREKRRQVR), 743 to 771 (ERKYLEEELQQEEDRLQREKQLLREDREK), 772 to 796 (RQYLEKVELQREEEQLQREKRRQER), and 797 to 832 (ERQYREEELLREEERLHRKEQQLQREECEKRRRQEL). Residues 413–832 (ERQYREVELQ…ECEKRRRQEL (420 aa)) form a 14 X 28 AA approximate tandem repeats region. Disordered regions lie at residues 782–803 (REEEQLQREKRRQERERQYREE), 839–942 (EELQ…RKFR), and 980–1000 (QLRQERDRKFREELSRQERDR). Composition is skewed to basic and acidic residues over residues 850–884 (FRDDDQHQNEVRNSRVYSKHRENKEKSRQLDDSWV), 895–918 (PLQDEQEEKREREQEWRSRQKRDS), and 925–942 (LLEREQQKETERRDRKFR). Repeat copies occupy residues 938 to 961 (DRKFREEEQLLKGQREEKIRYLEE), 962 to 985 (DRKFREEEQQLRRLEREQQLRQER), 986 to 1021 (DRKFREELSRQERDRKFREEEQLLQEREEQLRRQER), 1022 to 1044 (DRKFREEEQLLQEREEQLRRQER), 1045 to 1067 (DRKFREEEQLLQEREEQLRRQER), 1068 to 1090 (DRKFREEEQQLRLLEREQQLRQE), 1091 to 1121 (RNRKFREEQLLREREEQLRLQEGEPQLRQKR), 1122 to 1144 (DRKFHEEEQLLQEREEQLRRQER), 1145 to 1167 (DRKFREEAQILKEREEQLRRQER), 1168 to 1197 (DRKFREEEQLLQEREELRRQEREPQLRQER), 1198 to 1227 (DRKFREEEQLLQEREKLRRQEREPQLRQER), 1228 to 1250 (DRKFHEEEQLLQEREEQLRRQER), 1251 to 1273 (DRKFREEAQLLQEREEQLRRQER), 1274 to 1296 (DRKFREEEQLLQEREEQLRRQER), 1297 to 1319 (DRKFREEEQLLQEREEQLRRQER), 1320 to 1342 (DRKFREEEQLLKESEEQLRRQER), 1343 to 1368 (DRKFHEKEHLLREREEQQLRRQELEG), 1369 to 1391 (VFSQEEQLRRAEQEEEQRRQRQR), 1392 to 1416 (DRKFLEEEQSLQREREEEKRRVQEQ), 1417 to 1439 (DRKFLEQEEQLHREEQEELRRRQ), 1440 to 1461 (QLDQQYRAEEQFAREEKRRRQE), 1462 to 1484 (QELRQEEQRRRQERERKFREEEQ), and 1485 to 1507 (LRRQQQEEQKRRQERDVQQSRRQ). Residues 938–1507 (DRKFREEEQL…ERDVQQSRRQ (570 aa)) are 23 X 23 AA approximate tandem repeats. Residues 1489–1523 (QQEEQKRRQERDVQQSRRQVWEEDKGRRQVLEAGK) show a composition bias toward basic and acidic residues. The tract at residues 1489 to 1549 (QQEEQKRRQE…IQEQRSQYRP (61 aa)) is disordered.

Belongs to the S100-fused protein family. In terms of assembly, homodimer. In terms of processing, substrate of transglutaminase. Some 200 arginines are probably converted to citrullines by peptidylarginine deimidase. In terms of tissue distribution, found in the hard keratinizing tissues such as the inner root sheath (IRS) of hair follicles and medulla, and in the epithelia of the tongue, hoof and rumen.

In terms of biological role, intermediate filament-associated protein that associates in regular arrays with keratin intermediate filaments (KIF) of the inner root sheath cells of the hair follicle and the granular layer of the epidermis. It later becomes cross-linked to KIF by isodipeptide bonds. It may serve as scaffold protein, together with involucrin, in the organization of the cell envelope or even anchor the cell envelope to the KIF network. It may be involved in its own calcium-dependent postsynthetic processing during terminal differentiation. The polypeptide is Trichohyalin (TCHH) (Ovis aries (Sheep)).